The following is a 275-amino-acid chain: N-(5'-phosphoribosyl)anthranilate isomerase 2, chloroplastic (275 aa).

The N-terminal 32 residues, 1–32 (MSTGISTDLHVHFGALNFSKTYKSGLSNRTVS), are a transit peptide targeting the chloroplast.

This sequence belongs to the TrpF family. In terms of tissue distribution, expressed in roots and shoots.

It is found in the plastid. The protein resides in the chloroplast. The enzyme catalyses N-(5-phospho-beta-D-ribosyl)anthranilate = 1-(2-carboxyphenylamino)-1-deoxy-D-ribulose 5-phosphate. Its pathway is amino-acid biosynthesis; L-tryptophan biosynthesis; L-tryptophan from chorismate: step 3/5. The chain is N-(5'-phosphoribosyl)anthranilate isomerase 2, chloroplastic (PAI2) from Arabidopsis thaliana (Mouse-ear cress).